A 146-amino-acid polypeptide reads, in one-letter code: MSYCKQEGKDCIIFVTKEDHEAPSNAELVEDDPNDPYEDHGLILPNGDINWNCPCLGGMASGPCGQQFKDAFSCFHYSKEEIKGSDCVENFRGMQECMQKYPELYPQEDDNDSAPSGGANTAPTDSLPASSTDSTAAAATENPATS.

Intrachain disulfides connect C53–C55, C64–C97, and C74–C87. A CHCH domain is found at 61 to 105; the sequence is SGPCGQQFKDAFSCFHYSKEEIKGSDCVENFRGMQECMQKYPELY. Short sequence motifs (cx9C motif) lie at residues 64–74 and 87–97; these read CGQQFKDAFSC and CVENFRGMQEC. Residues 101–146 form a disordered region; that stretch reads YPELYPQEDDNDSAPSGGANTAPTDSLPASSTDSTAAAATENPATS. A compositionally biased stretch (low complexity) spans 123–140; sequence PTDSLPASSTDSTAAAAT.

As to quaternary structure, monomer. Can form homooligomers.

It is found in the mitochondrion intermembrane space. Its function is as follows. Central component of a redox-sensitive mitochondrial intermembrane space import machinery which is required for the biogenesis of respiratory chain complexes. Functions as chaperone and catalyzes the formation of disulfide bonds in substrate proteins, such as COX17 or MICU1. Required for the import and folding of small cysteine-containing proteins (small Tim) in the mitochondrial intermembrane space (IMS). Precursor proteins to be imported into the IMS are translocated in their reduced form into the mitochondria. The polypeptide is Mitochondrial intermembrane space import and assembly protein 40 (chchd4) (Danio rerio (Zebrafish)).